A 96-amino-acid chain; its full sequence is Prokineticin Bm8-f (96 aa).

Positions 1–19 are cleaved as a signal peptide; that stretch reads MKCFAQIVVLLLVIAFSHG. 5 disulfide bridges follow: Cys-26/Cys-38, Cys-32/Cys-50, Cys-37/Cys-78, Cys-60/Cys-86, and Cys-80/Cys-95.

It belongs to the AVIT (prokineticin) family. Expressed by the skin glands.

The protein resides in the secreted. Its function is as follows. Potent agonist for both PKR1/PROKR1 and PKR2/PROKR2, and inducer of a potent and long-lasting hyperalgesia. Also potentiates capsaicin-induced TRPV1 current, when tested on DRG neurons. At subnanomolar concentrations, this protein both induces potent chemotaxis of macrophages and stimulates LPS-induced production of the pro-inflammatory cytokines IL-1 and IL-12. In vivo, potently stimulates the contraction of the guinea-pig gastrointestinal (GI) smooth muscle (nanomolar concentration). This is Prokineticin Bm8-f from Bombina maxima (Giant fire-bellied toad).